The primary structure comprises 295 residues: MPTNEQRRATAKRKLKRQLERRAKQARWRRVLLISGGVVVAVAVIITVVATVVISKLGHKHDTASSTASNSLTATKTPAVTPSVLPLPSFQPSTNLGVNCQYPPSADKAAKPVKPPRAGKVPTDPATVSASMATNQGNIGLLLNNAESPCTVNSFASLTGQGFFNNTKCHRLTTSLMLGVLQCGDPKVDGTGGPGYKFANEYPTDQYPPNDPKLKQPVLYPRGTLAMANSGPNTNGSQFFLVYHDSQLPPEYTVFGTIQADGLATLDKIAKGGIASGGDDGPPATEVTIESLRLD.

Disordered stretches follow at residues 105–128 (SADK…PATV) and 274–295 (IASG…LRLD). In terms of domain architecture, PPIase cyclophilin-type spans 126–294 (ATVSASMATN…TEVTIESLRL (169 aa)).

This sequence belongs to the cyclophilin-type PPIase family.

It carries out the reaction [protein]-peptidylproline (omega=180) = [protein]-peptidylproline (omega=0). PPIases accelerate the folding of proteins. It catalyzes the cis-trans isomerization of proline imidic peptide bonds in oligopeptides. This is Probable peptidyl-prolyl cis-trans isomerase B (ppiB) from Mycobacterium leprae (strain TN).